The sequence spans 272 residues: Auxin-responsive protein IAA5 (272 aa).

The disordered stretch occupies residues 1 to 92 (MSPPLEPHDY…DSSPRHGASS (92 aa)). Low complexity-rich tracts occupy residues 14–33 (SAAAASPTPSSSSCSSSPNP) and 40–50 (PRLTLRLGLPG). The short motif at 44–48 (LRLGL) is the EAR-like (transcriptional repression) element. Residues 152–256 (PLYVKVSMDG…RKLKIMRGSD (105 aa)) form the PB1 domain.

It belongs to the Aux/IAA family. In terms of assembly, homodimers and heterodimers. In terms of tissue distribution, highly expressed in roots and flowers. Expressed in shoots.

It is found in the nucleus. Aux/IAA proteins are short-lived transcriptional factors that function as repressors of early auxin response genes at low auxin concentrations. In Oryza sativa subsp. indica (Rice), this protein is Auxin-responsive protein IAA5 (IAA5).